The sequence spans 304 residues: UDP-N-acetylenolpyruvoylglucosamine reductase (304 aa).

In terms of domain architecture, FAD-binding PCMH-type spans 31–196; it reads KVGGPADYLA…ISAKFNLKPG (166 aa). Arginine 175 is a catalytic residue. Catalysis depends on serine 225, which acts as the Proton donor. The active site involves glutamate 295.

The protein belongs to the MurB family. FAD is required as a cofactor.

The protein resides in the cytoplasm. The enzyme catalyses UDP-N-acetyl-alpha-D-muramate + NADP(+) = UDP-N-acetyl-3-O-(1-carboxyvinyl)-alpha-D-glucosamine + NADPH + H(+). Its pathway is cell wall biogenesis; peptidoglycan biosynthesis. Its function is as follows. Cell wall formation. The protein is UDP-N-acetylenolpyruvoylglucosamine reductase of Streptococcus thermophilus (strain ATCC BAA-491 / LMD-9).